A 220-amino-acid chain; its full sequence is Superoxide dismutase [Fe] (220 aa).

Fe cation contacts are provided by histidine 26, histidine 73, aspartate 164, and histidine 168.

It belongs to the iron/manganese superoxide dismutase family. Homodimer. Fe cation is required as a cofactor.

The enzyme catalyses 2 superoxide + 2 H(+) = H2O2 + O2. Its function is as follows. Destroys superoxide anion radicals which are normally produced within the cells and which are toxic to biological systems. The chain is Superoxide dismutase [Fe] (sodB) from Campylobacter coli.